Here is a 355-residue protein sequence, read N- to C-terminus: 3-isopropylmalate dehydrogenase (355 aa).

Residues R90, R100, R128, and D222 each coordinate substrate. Mg(2+)-binding residues include D222, D246, and D250. Residue 280–292 (GSAPDIAGKGIAN) coordinates NAD(+).

This sequence belongs to the isocitrate and isopropylmalate dehydrogenases family. LeuB type 1 subfamily. As to quaternary structure, homodimer. Mg(2+) is required as a cofactor. Requires Mn(2+) as cofactor.

The protein localises to the cytoplasm. The enzyme catalyses (2R,3S)-3-isopropylmalate + NAD(+) = 4-methyl-2-oxopentanoate + CO2 + NADH. The protein operates within amino-acid biosynthesis; L-leucine biosynthesis; L-leucine from 3-methyl-2-oxobutanoate: step 3/4. Catalyzes the oxidation of 3-carboxy-2-hydroxy-4-methylpentanoate (3-isopropylmalate) to 3-carboxy-4-methyl-2-oxopentanoate. The product decarboxylates to 4-methyl-2 oxopentanoate. This is 3-isopropylmalate dehydrogenase from Burkholderia thailandensis (strain ATCC 700388 / DSM 13276 / CCUG 48851 / CIP 106301 / E264).